An 875-amino-acid polypeptide reads, in one-letter code: DNA gyrase subunit A (875 aa).

The Topo IIA-type catalytic domain maps to L34–L533. Residue Y122 is the O-(5'-phospho-DNA)-tyrosine intermediate of the active site. A GyrA-box motif is present at residues Q560–G566. The disordered stretch occupies residues E841–E875. Residues E857 to E875 are compositionally biased toward acidic residues.

This sequence belongs to the type II topoisomerase GyrA/ParC subunit family. In terms of assembly, heterotetramer, composed of two GyrA and two GyrB chains. In the heterotetramer, GyrA contains the active site tyrosine that forms a transient covalent intermediate with DNA, while GyrB binds cofactors and catalyzes ATP hydrolysis.

It localises to the cytoplasm. It carries out the reaction ATP-dependent breakage, passage and rejoining of double-stranded DNA.. Functionally, a type II topoisomerase that negatively supercoils closed circular double-stranded (ds) DNA in an ATP-dependent manner to modulate DNA topology and maintain chromosomes in an underwound state. Negative supercoiling favors strand separation, and DNA replication, transcription, recombination and repair, all of which involve strand separation. Also able to catalyze the interconversion of other topological isomers of dsDNA rings, including catenanes and knotted rings. Type II topoisomerases break and join 2 DNA strands simultaneously in an ATP-dependent manner. In Shigella flexneri, this protein is DNA gyrase subunit A.